A 119-amino-acid chain; its full sequence is Holo-[acyl-carrier-protein] synthase (119 aa).

Mg(2+) contacts are provided by D8 and E58.

This sequence belongs to the P-Pant transferase superfamily. AcpS family. Mg(2+) serves as cofactor.

It is found in the cytoplasm. It carries out the reaction apo-[ACP] + CoA = holo-[ACP] + adenosine 3',5'-bisphosphate + H(+). Transfers the 4'-phosphopantetheine moiety from coenzyme A to a Ser of acyl-carrier-protein. The chain is Holo-[acyl-carrier-protein] synthase from Streptococcus thermophilus (strain CNRZ 1066).